Consider the following 63-residue polypeptide: Large ribosomal subunit protein uL29 (63 aa).

This sequence belongs to the universal ribosomal protein uL29 family.

The sequence is that of Large ribosomal subunit protein uL29 from Pectobacterium atrosepticum (strain SCRI 1043 / ATCC BAA-672) (Erwinia carotovora subsp. atroseptica).